The sequence spans 310 residues: Olfactory receptor 8I2 (310 aa).

The Extracellular segment spans residues 1-25 (MAGNNFTEVTVFILSGFANHPELQV). A glycan (N-linked (GlcNAc...) asparagine) is linked at Asn-5. The helical transmembrane segment at 26–46 (SLFLMFLFIYLFTVLGNLGLI) threads the bilayer. The Cytoplasmic portion of the chain corresponds to 47-54 (TLIRMDSQ). Residues 55–75 (LHTPMYFFLSNLAFIDIFYSS) traverse the membrane as a helical segment. Residues 76–99 (TVTPKALVNFQSNRRSISFVGCFV) are Extracellular-facing. Cys-97 and Cys-188 are joined by a disulfide. The chain crosses the membrane as a helical span at residues 100 to 120 (QMYFFVGLVCCECFLLGSMAY). Residues 121 to 139 (NRYIAICNPLLYSVVMSQK) are Cytoplasmic-facing. Residues 140 to 160 (VSNWLGVMPYVIGFTSSLISV) form a helical membrane-spanning segment. Residues 161 to 196 (WVISSLAFCDSSINHFFCDTTALLALSCVDTFGTEM) are Extracellular-facing. A helical membrane pass occupies residues 197-216 (VSFVLAGFTLLSSLLIITVT). Residues 217–236 (YIIIISAILRIQSAAGRQKA) are Cytoplasmic-facing. A helical membrane pass occupies residues 237 to 257 (FSTCASHLMAVTIFYGSLIFT). The Extracellular portion of the chain corresponds to 258 to 270 (YLQPDNTSSLTQA). Residues 271–291 (QVASVFYTIVIPMLNPLIYSL) traverse the membrane as a helical segment. Residues 292-310 (RNKDVKNALLRVIHRKLFP) are Cytoplasmic-facing.

The protein belongs to the G-protein coupled receptor 1 family.

The protein resides in the cell membrane. Functionally, odorant receptor. This Homo sapiens (Human) protein is Olfactory receptor 8I2 (OR8I2).